The sequence spans 174 residues: Shikimate kinase (174 aa).

14 to 19 (GAGKST) provides a ligand contact to ATP. S18 contributes to the Mg(2+) binding site. The substrate site is built by D36, R60, and G82. R120 is a binding site for ATP. R139 is a binding site for substrate. Q156 is an ATP binding site.

Belongs to the shikimate kinase family. In terms of assembly, monomer. Mg(2+) serves as cofactor.

The protein localises to the cytoplasm. The enzyme catalyses shikimate + ATP = 3-phosphoshikimate + ADP + H(+). Its pathway is metabolic intermediate biosynthesis; chorismate biosynthesis; chorismate from D-erythrose 4-phosphate and phosphoenolpyruvate: step 5/7. Its function is as follows. Catalyzes the specific phosphorylation of the 3-hydroxyl group of shikimic acid using ATP as a cosubstrate. The sequence is that of Shikimate kinase from Vibrio cholerae serotype O1 (strain ATCC 39541 / Classical Ogawa 395 / O395).